A 346-amino-acid chain; its full sequence is Aldose 1-epimerase (346 aa).

Arg-79 contacts substrate. The active-site Proton donor is His-175. Asp-245 contacts substrate. The active-site Proton acceptor is Glu-309.

It belongs to the aldose epimerase family.

The protein resides in the cytoplasm. It catalyses the reaction alpha-D-glucose = beta-D-glucose. It functions in the pathway carbohydrate metabolism; hexose metabolism. Functionally, mutarotase converts alpha-aldose to the beta-anomer. It is active on D-glucose, L-arabinose, D-xylose, D-galactose, maltose and lactose. The chain is Aldose 1-epimerase (galM) from Escherichia coli (strain K12).